The chain runs to 234 residues: uncharacterized protein (234 aa).

Residue valine 10 to valine 34 coordinates NADP(+). Serine 143 provides a ligand contact to substrate. The active-site Proton acceptor is the tyrosine 156.

The protein belongs to the short-chain dehydrogenases/reductases (SDR) family.

This is an uncharacterized protein from Staphylococcus saprophyticus subsp. saprophyticus (strain ATCC 15305 / DSM 20229 / NCIMB 8711 / NCTC 7292 / S-41).